The primary structure comprises 419 residues: Endochitinase 2 (419 aa).

The first 18 residues, 1 to 18 (MHHLRALVGVGLAGLAAG), serve as a signal peptide directing secretion. The GH18 domain occupies 35-343 (AQNVVYWGQN…QQAKSILVNG (309 aa)). N153 carries an N-linked (GlcNAc...) asparagine glycan. The active-site Proton donor is the E173. Residues N237 and N256 are each glycosylated (N-linked (GlcNAc...) asparagine). The disordered stretch occupies residues 343 to 390 (GAPCPSSGPPSSTPATAPAPTATTMPSSTSVSSPTASPTGGTVPQWGQ). The segment covering 355–384 (TPATAPAPTATTMPSSTSVSSPTASPTGGT) has biased composition (low complexity). The region spanning 383-419 (GTVPQWGQCGGEGYSGPTQCVPPYQCVKQGDWWSSCR) is the CBM1 domain.

This sequence belongs to the glycosyl hydrolase 18 family. Chitinase class III subfamily.

It localises to the secreted. The enzyme catalyses Random endo-hydrolysis of N-acetyl-beta-D-glucosaminide (1-&gt;4)-beta-linkages in chitin and chitodextrins.. In terms of biological role, secreted chitinase involved in the degradation of chitin, a component of the cell walls of fungi and exoskeletal elements of some animals (including worms and arthropods). Participates in the infection process and directly acts in the penetration process of the host cuticle. This is Endochitinase 2 (chi2) from Metarhizium anisopliae (Entomophthora anisopliae).